The chain runs to 168 residues: S-ribosylhomocysteine lyase (168 aa).

Fe cation contacts are provided by His54, His58, and Cys128.

Belongs to the LuxS family. As to quaternary structure, homodimer. Fe cation is required as a cofactor.

It catalyses the reaction S-(5-deoxy-D-ribos-5-yl)-L-homocysteine = (S)-4,5-dihydroxypentane-2,3-dione + L-homocysteine. Its function is as follows. Involved in the synthesis of autoinducer 2 (AI-2) which is secreted by bacteria and is used to communicate both the cell density and the metabolic potential of the environment. The regulation of gene expression in response to changes in cell density is called quorum sensing. Catalyzes the transformation of S-ribosylhomocysteine (RHC) to homocysteine (HC) and 4,5-dihydroxy-2,3-pentadione (DPD). This Neisseria meningitidis serogroup C / serotype 2a (strain ATCC 700532 / DSM 15464 / FAM18) protein is S-ribosylhomocysteine lyase.